A 797-amino-acid chain; its full sequence is Probable exo-1,4-beta-xylosidase xlnD (797 aa).

The N-terminal stretch at 1-20 is a signal peptide; it reads MPGAASIVAVLAALLPTALG. N-linked (GlcNAc...) asparagine glycans are attached at residues asparagine 23, asparagine 87, asparagine 142, and asparagine 237. Residue aspartate 310 is part of the active site. Asparagine 326, asparagine 391, asparagine 404, asparagine 442, asparagine 479, asparagine 521, asparagine 617, asparagine 644, asparagine 657, asparagine 684, and asparagine 706 each carry an N-linked (GlcNAc...) asparagine glycan.

It belongs to the glycosyl hydrolase 3 family.

It localises to the secreted. The enzyme catalyses Hydrolysis of (1-&gt;4)-beta-D-xylans, to remove successive D-xylose residues from the non-reducing termini.. It functions in the pathway glycan degradation; xylan degradation. In terms of biological role, xylan 1,4-beta-xylosidase involved in the hydrolysis of xylan, a major structural heterogeneous polysaccharide found in plant biomass representing the second most abundant polysaccharide in the biosphere, after cellulose. The sequence is that of Probable exo-1,4-beta-xylosidase xlnD (xlnD) from Aspergillus flavus (strain ATCC 200026 / FGSC A1120 / IAM 13836 / NRRL 3357 / JCM 12722 / SRRC 167).